The primary structure comprises 741 residues: ABC transporter D family member 2 (741 aa).

3 helical membrane passes run 39–59 (GSLG…FSLV), 119–139 (FLSL…SVSI), and 260–280 (VVVM…VSGF). The region spanning 131 to 409 (ARTMLSVSIA…LMVALSQAIG (279 aa)) is the ABC transmembrane type-1 domain. Positions 518–740 (IKFENVSIVS…DDDHLKKPLS (223 aa)) constitute an ABC transporter domain. Residue 551–558 (GPNGSGKS) participates in ATP binding.

The protein belongs to the ABC transporter superfamily. ABCD family. Peroxisomal fatty acyl CoA transporter (TC 3.A.1.203) subfamily.

It localises to the membrane. This Dictyostelium discoideum (Social amoeba) protein is ABC transporter D family member 2 (abcD2).